The primary structure comprises 142 residues: 3-hydroxyacyl-[acyl-carrier-protein] dehydratase FabZ (142 aa).

Histidine 50 is a catalytic residue.

Belongs to the thioester dehydratase family. FabZ subfamily.

It is found in the cytoplasm. The enzyme catalyses a (3R)-hydroxyacyl-[ACP] = a (2E)-enoyl-[ACP] + H2O. Its function is as follows. Involved in unsaturated fatty acids biosynthesis. Catalyzes the dehydration of short chain beta-hydroxyacyl-ACPs and long chain saturated and unsaturated beta-hydroxyacyl-ACPs. The chain is 3-hydroxyacyl-[acyl-carrier-protein] dehydratase FabZ from Clostridium tetani (strain Massachusetts / E88).